The following is a 429-amino-acid chain: MKTSILILAAGLGTRMKSQKPKVLQELCQKSMILHILKKAFALSDDVSVVLSHQKERVEKEILEYFPKTQILEQDLQNYPGTAGALRGFEPKNERVLILCGDMPLVEQTSLEALLSNNAKLNLAVFKARDPKSYGRVVIKNDSVEKIVEFKDANTQEKEINTCNAGVYVIDSRLLKELLPLIDNNNAAKEYYLTDIVKLAKEKDVMIKAVFVDEDEFMGINDKFELSIAENFMQEKIKKYWMQQGVIFHLPQSTFIGADVEFVGECEVYENVRIEGKSKIINSIIKSSSVIENSIVENSDVGPLAHLRPNCELKNTHIGNFVECKNAKLNTVKAGHLSYLGDCEIDSGTNIGCGTITCNYDGVKKYKTIIGKNVFVGSDTQFIAPVKIEDEVIIAAGSTVSVNVEKGALFINRAGHKMIKDYYYKKFQK.

The tract at residues 1-223 (MKTSILILAA…EDEFMGINDK (223 aa)) is pyrophosphorylase. Residues 8–11 (LAAG), K22, and 81–82 (GT) contribute to the UDP-N-acetyl-alpha-D-glucosamine site. D102 lines the Mg(2+) pocket. Residues G135, E149, N164, and N221 each contribute to the UDP-N-acetyl-alpha-D-glucosamine site. N221 provides a ligand contact to Mg(2+). The interval 224–244 (FELSIAENFMQEKIKKYWMQQ) is linker. The interval 245-429 (GVIFHLPQST…KDYYYKKFQK (185 aa)) is N-acetyltransferase. UDP-N-acetyl-alpha-D-glucosamine-binding residues include R308 and K325. The Proton acceptor role is filled by H336. Positions 339 and 350 each coordinate UDP-N-acetyl-alpha-D-glucosamine. Acetyl-CoA is bound by residues 359–360 (NY), S378, A396, and R413.

It in the N-terminal section; belongs to the N-acetylglucosamine-1-phosphate uridyltransferase family. The protein in the C-terminal section; belongs to the transferase hexapeptide repeat family. Homotrimer. The cofactor is Mg(2+).

Its subcellular location is the cytoplasm. It catalyses the reaction alpha-D-glucosamine 1-phosphate + acetyl-CoA = N-acetyl-alpha-D-glucosamine 1-phosphate + CoA + H(+). The catalysed reaction is N-acetyl-alpha-D-glucosamine 1-phosphate + UTP + H(+) = UDP-N-acetyl-alpha-D-glucosamine + diphosphate. It participates in nucleotide-sugar biosynthesis; UDP-N-acetyl-alpha-D-glucosamine biosynthesis; N-acetyl-alpha-D-glucosamine 1-phosphate from alpha-D-glucosamine 6-phosphate (route II): step 2/2. Its pathway is nucleotide-sugar biosynthesis; UDP-N-acetyl-alpha-D-glucosamine biosynthesis; UDP-N-acetyl-alpha-D-glucosamine from N-acetyl-alpha-D-glucosamine 1-phosphate: step 1/1. It functions in the pathway bacterial outer membrane biogenesis; LPS lipid A biosynthesis. Catalyzes the last two sequential reactions in the de novo biosynthetic pathway for UDP-N-acetylglucosamine (UDP-GlcNAc). The C-terminal domain catalyzes the transfer of acetyl group from acetyl coenzyme A to glucosamine-1-phosphate (GlcN-1-P) to produce N-acetylglucosamine-1-phosphate (GlcNAc-1-P), which is converted into UDP-GlcNAc by the transfer of uridine 5-monophosphate (from uridine 5-triphosphate), a reaction catalyzed by the N-terminal domain. This chain is Bifunctional protein GlmU, found in Campylobacter jejuni (strain RM1221).